A 410-amino-acid chain; its full sequence is MNYPIKEIRSDFPILSEKINNSPLIYLDNAASSQKPKCVLQREIIYSSKEHSAVHRGIHTLSKNATKNMEDIRSKIAKFINAKSDSEIIFVKGTTEGINLVANTWGETFIKKGDNIVITQMEHHANIVPWQLLSMRKKVDIKYIPLLPSGKLDICKIDDIINNNTRIFCITHVSNILGTCNLIEKIIKKIKNNYDIKVLIDGAQAIMHMKIDVQKIDCDFYVFSGHKIYGPSGIGVLYGKKKLLKKMPPWEGGGGMIKKVCLFSGTTFNEIPWRFEAGSPNISGIIGLGKSIEYVKKIGIKKIQKYEKKLIKYALLKIKNIPNIKIYSSEINTSIIPFNLKGCHSYDVGILLDKYGVAIRTGHHCSMPIMNFFKVHSMCRISVAMYSDESDIDNFIKSLLKVQKFLRRFN.

Lys-227 is subject to N6-(pyridoxal phosphate)lysine. Cys-365 acts as the Cysteine persulfide intermediate in catalysis.

It belongs to the class-V pyridoxal-phosphate-dependent aminotransferase family. Csd subfamily. Homodimer. Interacts with SufE and the SufBCD complex composed of SufB, SufC and SufD. The interaction with SufE is required to mediate the direct transfer of the sulfur atom from the S-sulfanylcysteine. Pyridoxal 5'-phosphate is required as a cofactor.

It localises to the cytoplasm. It carries out the reaction (sulfur carrier)-H + L-cysteine = (sulfur carrier)-SH + L-alanine. The enzyme catalyses L-selenocysteine + AH2 = hydrogenselenide + L-alanine + A + H(+). It participates in cofactor biosynthesis; iron-sulfur cluster biosynthesis. Cysteine desulfurases mobilize the sulfur from L-cysteine to yield L-alanine, an essential step in sulfur metabolism for biosynthesis of a variety of sulfur-containing biomolecules. Component of the suf operon, which is activated and required under specific conditions such as oxidative stress and iron limitation. Acts as a potent selenocysteine lyase in vitro, that mobilizes selenium from L-selenocysteine. Selenocysteine lyase activity is however unsure in vivo. The protein is Cysteine desulfurase of Wigglesworthia glossinidia brevipalpis.